Consider the following 70-residue polypeptide: U2-agatoxin-Ao1n (70 aa).

The first 20 residues, Met-1 to Ala-20, serve as a signal peptide directing secretion. Positions Val-21–Arg-34 are excised as a propeptide. 3 disulfide bridges follow: Cys-37-Cys-53, Cys-44-Cys-58, and Cys-52-Cys-68. At Leu-69 the chain carries Leucine amide.

Belongs to the neurotoxin 01 (U2-agtx) family. As to expression, expressed by the venom gland.

Its subcellular location is the secreted. Functionally, insect active toxin causing rapid but reversible paralysis in crickets. No activity shown in mammals. Does not show effect on mammalian voltage-gated calcium channels. This chain is U2-agatoxin-Ao1n, found in Agelena orientalis (Funnel-web spider).